We begin with the raw amino-acid sequence, 1485 residues long: MAGNFRFMMDQKDIVRFLTTTVDSFIQDRLINKEQRTQHKEQCAERLAAEDGSGDKDTEVEYSDQAVLANLDWGIEALEEAINTYNMETKLARLDYAEKMLQVCAMLNPKQKIAGVPNSYLSAWAHLNLSYLWKLRNNVQNCISHALEMFIVDPFFTRIDFAPELWKSLFLPHMSSIVGWYSEERHRLMMEVIPDSADLSFTADFEQFFNESLVLTMRPHQLEKLQKLEQLYGESLDENTKLYAKYYNDCMNSDSSSSKKAVPMLPIAEPPMTPLHELSRTIPDFVKFGPILPKSAGFSLAPRSKDVLNETIRENVTSSNLKEEKLSIWGAKDTIIEENEDDSDSELDNESVDSDDKNNIFSPGMKMMKYEGVETKVDLSCQRNQIPSPDIFSPLDSPRTAPNNSSPNPDMHSKRDSKFLRLSSSRIREPTISDSLTSSPDISIDNISNADNEVMVRNNIKRKNDSQTPSMNQDNENSLVLNDSSHCESEDGYQSSSSLPKLEKLSMGSKPPKDFVCPITGQIFCDPVTLETGQTYERKAIQEWLRTGNTTCPITRQPLSASILPKTNYVLKRLITSWKEQNPELAQEFSNVNTPRGSSCSPSAKDIPMLSTRQRTTDSPNHKNKDYARQRSNRFMPAAITTSPTSVLSQAAVETIVNSLKPYISSLCTSENLPECEEAVLKIARLLKDSKTNPQIHSYLSKPTIINGLVEILSASRNREVLRTSIYILSELIFTDDSVAETLNSVDSDFDCLATLLKNGLAEAALLIYQLRPVFAQLSAHELIPSLVDVIQNKNEELDDFQLVIDPKDAAIAILEQTLMGGDEYSRSLNASSVISANGIPTLVKYLERMEGRRSVVSVLLCCMQAEKSCKNLIANRIELSPVLELFHSGNDSVRGTCVEFLSELVQLNRRTSCNQLLHTIKDEGAFSTMHTFLVYLQMAPMEHQLAVASLLLQLDLLAEPRKMSIYREEAVETLIEALWQKDFSNTQMKALDALLFLIGHISSSGKSYTEAWLLKIAGFDQPYNALMKVEQLGQHDNDLIETMEDEKNALNSWQKRIASVLCNHENGSIFKALEECLKSNSLKMAKSCLVLATWLTRMLYTLPDTGVRDVARKSLLEEVIKVLHSSKSLEDMILVTLSLYPFISDPTVHEVLRVYAKSIYRILRKLKKYSTVAADILKALLNLNSVDVTELWSCKEVVELDLSSNGEVLSLHYLNGQVLSGLMDGTSKVCDARKRIPRVIQETHEHTKAVTSLCSSGDRLYSASLDKTIRVWTIKSDGIKCIDVYDIKEAVHELAANDKLACYVSQGTGVKVFNWSEAPKLINFSKYVKSLAVAGDKLYCGCSGYSIQEVDLSTYTSNSFFTGTRKLLGKQTIHSLQIHDDYLFACVSSVDATAGKIFSLSQKMVVGSLSTGLDIHRIAINSDFIFAGTKFGTIEVWLKDKFTRVASIQMAGGHTKITSLVSDVDGMMLFVGSSDGKIQVWALD.

The span at 337–353 (EENEDDSDSELDNESVD) shows a compositional bias: acidic residues. Disordered stretches follow at residues 337-363 (EENE…IFSP), 384-450 (NQIP…ISNA), and 462-507 (RKND…KLSM). Low complexity predominate over residues 438–450 (SSPDISIDNISNA). A compositionally biased stretch (polar residues) spans 466-484 (SQTPSMNQDNENSLVLNDS). In terms of domain architecture, U-box spans 510–585 (KPPKDFVCPI…TSWKEQNPEL (76 aa)). 4 WD repeats span residues 1194–1232 (SCKE…KVCD), 1246–1283 (EHTK…IKCI), 1409–1448 (SLST…RVAS), and 1454–1485 (GHTK…WALD).

The enzyme catalyses S-ubiquitinyl-[E2 ubiquitin-conjugating enzyme]-L-cysteine + [acceptor protein]-L-lysine = [E2 ubiquitin-conjugating enzyme]-L-cysteine + N(6)-ubiquitinyl-[acceptor protein]-L-lysine.. Its pathway is protein modification; protein ubiquitination. Functionally, putative E3 ubiquitin-protein ligase involved in the rhizobial infection process. Plays an important role in the early steps of infection thread formation and in growth and differentiation of nodules. The sequence is that of Putative E3 ubiquitin-protein ligase LIN-2 from Lotus japonicus (Lotus corniculatus var. japonicus).